Reading from the N-terminus, the 301-residue chain is Acetylglutamate kinase (301 aa).

Substrate-binding positions include 71–72, Arg-93, and Asn-198; that span reads GG.

It belongs to the acetylglutamate kinase family. ArgB subfamily.

It is found in the cytoplasm. The enzyme catalyses N-acetyl-L-glutamate + ATP = N-acetyl-L-glutamyl 5-phosphate + ADP. The protein operates within amino-acid biosynthesis; L-arginine biosynthesis; N(2)-acetyl-L-ornithine from L-glutamate: step 2/4. Its function is as follows. Catalyzes the ATP-dependent phosphorylation of N-acetyl-L-glutamate. This is Acetylglutamate kinase from Zymomonas mobilis subsp. mobilis (strain ATCC 31821 / ZM4 / CP4).